We begin with the raw amino-acid sequence, 319 residues long: Annexin A4 (319 aa).

Thr-7 is subject to Phosphothreonine. Residue Ser-12 is modified to Phosphoserine. Annexin repeat units follow at residues 14-85, 86-157, 169-241, and 245-316; these read FNAT…GMMT, PTVL…SLTA, ALVR…AIVK, and NKPA…ILCG. Residues Lys-213, Lys-293, and Lys-300 each carry the N6-acetyllysine modification.

The protein belongs to the annexin family.

It is found in the zymogen granule membrane. Its function is as follows. Calcium/phospholipid-binding protein which promotes membrane fusion and is involved in exocytosis. The chain is Annexin A4 (Anxa4) from Rattus norvegicus (Rat).